We begin with the raw amino-acid sequence, 652 residues long: Endoplasmic reticulum chaperone BiP (652 aa).

The N-terminal stretch at 1–16 is a signal peptide; that stretch reads MRHLLLALLLLGGARA. Residues 34 to 37, Lys-94, 225 to 227, 291 to 298, and 362 to 365 contribute to the ATP site; these read GTTY, GGT, EKAKRALS, and GSTR. A nucleotide-binding (NBD) region spans residues 123-278; that stretch reads KPHIQVDVGG…KKKTGKDVRK (156 aa). Residues 407-417 are interdomain linker; it reads QDTGDLVLLDV. The interval 418-498 is substrate-binding (SBD); it reads CPLTLGIETV…PRGVPQIEVT (81 aa). Residues 630-652 form a disordered region; the sequence is SKLYGSAGPPPTGEEEAAEKDEL. Acidic residues predominate over residues 642-652; it reads GEEEAAEKDEL. Residues 649 to 652 carry the Prevents secretion from ER motif; sequence KDEL.

It belongs to the heat shock protein 70 family. In terms of assembly, monomer and homooligomer; homooligomerization via the interdomain linker inactivates the chaperone activity and acts as a storage of HSPA5/BiP molecules. Interacts with DNAJC10. Interacts with DNAJB9/ERdj4; leading to recruit HSPA5/BiP to ERN1/IRE1. Interacts with ERN1/IRE1; interaction takes place following interaction with DNAJB9/ERdj4 and leads to inactivate ERN1/IRE1.

It is found in the endoplasmic reticulum lumen. Its subcellular location is the melanosome. The protein localises to the cytoplasm. The protein resides in the cell surface. It catalyses the reaction ATP + H2O = ADP + phosphate + H(+). With respect to regulation, the chaperone activity is regulated by ATP-induced allosteric coupling of the nucleotide-binding (NBD) and substrate-binding (SBD) domains. In the ADP-bound and nucleotide-free (apo) states, the two domains have little interaction. In contrast, in the ATP-bound state the two domains are tightly coupled, which results in drastically accelerated kinetics in both binding and release of polypeptide substrates. J domain-containing co-chaperones (DNAJB9/ERdj4 or DNAJC10/ERdj5) stimulate the ATPase activity and are required for efficient substrate recognition by HSPA5/BiP. Homooligomerization inactivates participating HSPA5/BiP protomers and probably act as reservoirs to store HSPA5/BiP molecules when they are not needed by the cell. In terms of biological role, endoplasmic reticulum chaperone that plays a key role in protein folding and quality control in the endoplasmic reticulum lumen. Involved in the correct folding of proteins and degradation of misfolded proteins via its interaction with DNAJC10/ERdj5, probably to facilitate the release of DNAJC10/ERdj5 from its substrate. Acts as a key repressor of the EIF2AK3/PERK and ERN1/IRE1-mediated unfolded protein response (UPR). In the unstressed endoplasmic reticulum, recruited by DNAJB9/ERdj4 to the luminal region of ERN1/IRE1, leading to disrupt the dimerization of ERN1/IRE1, thereby inactivating ERN1/IRE1. Also binds and inactivates EIF2AK3/PERK in unstressed cells. Accumulation of misfolded protein in the endoplasmic reticulum causes release of HSPA5/BiP from ERN1/IRE1 and EIF2AK3/PERK, allowing their homodimerization and subsequent activation. May also play a role in apoptosis and cell proliferation. This is Endoplasmic reticulum chaperone BiP from Gallus gallus (Chicken).